Reading from the N-terminus, the 364-residue chain is Methylthioribose-1-phosphate isomerase (364 aa).

Substrate contacts are provided by residues 51-53 (RGA), Arg88, and Gln199. Asp240 functions as the Proton donor in the catalytic mechanism. A substrate-binding site is contributed by 250-251 (NK).

Belongs to the eIF-2B alpha/beta/delta subunits family. MtnA subfamily.

The enzyme catalyses 5-(methylsulfanyl)-alpha-D-ribose 1-phosphate = 5-(methylsulfanyl)-D-ribulose 1-phosphate. The protein operates within amino-acid biosynthesis; L-methionine biosynthesis via salvage pathway; L-methionine from S-methyl-5-thio-alpha-D-ribose 1-phosphate: step 1/6. Functionally, catalyzes the interconversion of methylthioribose-1-phosphate (MTR-1-P) into methylthioribulose-1-phosphate (MTRu-1-P). The protein is Methylthioribose-1-phosphate isomerase of Cereibacter sphaeroides (strain KD131 / KCTC 12085) (Rhodobacter sphaeroides).